A 300-amino-acid chain; its full sequence is Ribosomal protein L11 methyltransferase (300 aa).

Residues threonine 147, glycine 168, aspartate 190, and asparagine 236 each contribute to the S-adenosyl-L-methionine site.

Belongs to the methyltransferase superfamily. PrmA family.

The protein localises to the cytoplasm. The catalysed reaction is L-lysyl-[protein] + 3 S-adenosyl-L-methionine = N(6),N(6),N(6)-trimethyl-L-lysyl-[protein] + 3 S-adenosyl-L-homocysteine + 3 H(+). Its function is as follows. Methylates ribosomal protein L11. This is Ribosomal protein L11 methyltransferase from Leptospira borgpetersenii serovar Hardjo-bovis (strain JB197).